A 348-amino-acid polypeptide reads, in one-letter code: ECA polysaccharide chain length modulation protein (348 aa).

Transmembrane regions (helical) follow at residues 31-51 (FWII…TFFA) and 323-343 (AFLM…VALT).

This sequence belongs to the WzzB/Cld/Rol family. In terms of assembly, probably part of a complex composed of WzxE, WzyE and WzzE.

It is found in the cell inner membrane. It participates in bacterial outer membrane biogenesis; enterobacterial common antigen biosynthesis. Modulates the polysaccharide chain length of enterobacterial common antigen (ECA). This Salmonella typhimurium (strain LT2 / SGSC1412 / ATCC 700720) protein is ECA polysaccharide chain length modulation protein.